The primary structure comprises 148 residues: Deoxyuridine 5'-triphosphate nucleotidohydrolase (148 aa).

Substrate contacts are provided by residues 67 to 69 (RSG), asparagine 80, 84 to 86 (LID), and methionine 94.

It belongs to the dUTPase family. The cofactor is Mg(2+).

The catalysed reaction is dUTP + H2O = dUMP + diphosphate + H(+). It participates in pyrimidine metabolism; dUMP biosynthesis; dUMP from dCTP (dUTP route): step 2/2. Its function is as follows. This enzyme is involved in nucleotide metabolism: it produces dUMP, the immediate precursor of thymidine nucleotides and it decreases the intracellular concentration of dUTP so that uracil cannot be incorporated into DNA. In Ralstonia pickettii (strain 12J), this protein is Deoxyuridine 5'-triphosphate nucleotidohydrolase.